The chain runs to 75 residues: MYB-like transcription factor ETC3 (75 aa).

The disordered stretch occupies residues Met-1 to Ser-20. The region spanning Ser-34–Trp-71 is the Myb-like domain.

In terms of tissue distribution, expressed in leaf epidermal cells, stomate guard cells in leaves, cotyledons and hypocotyls, inflorescences, developing seeds and siliques.

The protein resides in the nucleus. Functionally, MYB-type transcription factor involved in epidermal cell fate specification. Acts as a negative regulator of trichome development, including endoreplication, by mediating lateral inhibition. Promotes the formation of hair developing cells in H position in root epidermis, probably by inhibiting non-hair cell formation. May have pleiotropic effects on flowering development and epidermal cell size through the regulation of endoreduplication. The polypeptide is MYB-like transcription factor ETC3 (ETC3) (Arabidopsis thaliana (Mouse-ear cress)).